A 188-amino-acid polypeptide reads, in one-letter code: Inactive cysteine S-methyltransferase OspZ (188 aa).

The protein belongs to the NleE/OspZ family.

The protein localises to the secreted. It localises to the host cytoplasm. It is found in the host nucleus. Functionally, inactive effector protein: in contrast to other members of the family, does not have the ability to inhibit host cell NF-kappa-B activation. Probably lacks cysteine S-methyltransferase activity due to its inability to bind S-adenosyl-L-methionine at the C-terminus. The chain is Inactive cysteine S-methyltransferase OspZ from Shigella flexneri.